The following is a 215-amino-acid chain: Urease accessory protein UreG (215 aa).

The disordered stretch occupies residues 1 to 21 (MNAPASSPARRTKKLPPLRVG). 24–31 (GPVGSGKT) is a GTP binding site.

The protein belongs to the SIMIBI class G3E GTPase family. UreG subfamily. Homodimer. UreD, UreF and UreG form a complex that acts as a GTP-hydrolysis-dependent molecular chaperone, activating the urease apoprotein by helping to assemble the nickel containing metallocenter of UreC. The UreE protein probably delivers the nickel.

The protein resides in the cytoplasm. Its function is as follows. Facilitates the functional incorporation of the urease nickel metallocenter. This process requires GTP hydrolysis, probably effectuated by UreG. The protein is Urease accessory protein UreG of Burkholderia vietnamiensis (strain G4 / LMG 22486) (Burkholderia cepacia (strain R1808)).